Reading from the N-terminus, the 257-residue chain is Hydroxyacylglutathione hydrolase (257 aa).

7 residues coordinate Zn(2+): His54, His56, Asp58, His59, His113, Asp137, and His175.

This sequence belongs to the metallo-beta-lactamase superfamily. Glyoxalase II family. As to quaternary structure, monomer. It depends on Zn(2+) as a cofactor.

The catalysed reaction is an S-(2-hydroxyacyl)glutathione + H2O = a 2-hydroxy carboxylate + glutathione + H(+). The protein operates within secondary metabolite metabolism; methylglyoxal degradation; (R)-lactate from methylglyoxal: step 2/2. In terms of biological role, thiolesterase that catalyzes the hydrolysis of S-D-lactoyl-glutathione to form glutathione and D-lactic acid. This is Hydroxyacylglutathione hydrolase from Acaryochloris marina (strain MBIC 11017).